A 221-amino-acid polypeptide reads, in one-letter code: Small ribosomal subunit protein uS3c (221 aa).

Positions 43 to 121 (IQNYIQKNMR…KLKIAITKIA (79 aa)) constitute a KH type-2 domain.

The protein belongs to the universal ribosomal protein uS3 family. Part of the 30S ribosomal subunit.

The protein resides in the plastid. The protein localises to the chloroplast. This chain is Small ribosomal subunit protein uS3c (rps3), found in Jasminum nudiflorum (Winter jasmine).